The following is a 498-amino-acid chain: MRPPACWWLLAPPALLALLTCSLAFGLASEDTKKEVKQSQDLEKSGISRKNDIDLKGIVFVIQSQSNSFHAKRAEQLKKSILKQAADLTQELPSVLLLHQLAKQEGAWTILPLLPHFSVTYSRNSSWIFFCEEETRIQIPKLLETLRRYDPSKEWFLGKALHDEEATIIHHYAFSENPTVFKYPDFAAGWALSIPLVNKLTKRLKSESLKSDFTIDLKHEIALYIWDKGGGPPLTPVPEFCTNDVDFYCATTFHSFLPLCRKPVKKKDIFVAVKTCKKFHGDRIPIVKQTWESQASLIEYYSDYTENSIPTVDLGIPNTDRGHCGKTFAILERFLNRSQDKTAWLVIVDDDTLISISRLQHLLSCYDSGEPVFLGERYGYGLGTGGYSYITGGGGMVFSREAVRRLLASKCRCYSNDAPDDMVLGMCFSGLGIPVTHSPLFHQARPVDYPKDYLSHQVPISFHKHWNIDPVKVYFTWLAPSDEDKARQETQKGFREEL.

The Cytoplasmic portion of the chain corresponds to methionine 1 to cysteine 6. A helical; Signal-anchor for type II membrane protein membrane pass occupies residues tryptophan 7 to leucine 27. The Lumenal portion of the chain corresponds to alanine 28–leucine 498. Asparagine 336 carries N-linked (GlcNAc...) asparagine glycosylation. A Prevents secretion from ER motif is present at residues arginine 495–leucine 498.

This sequence belongs to the glycosyltransferase 31 family. In terms of tissue distribution, widely expressed, with highest levels in testis and uterus.

Its subcellular location is the endoplasmic reticulum membrane. Its pathway is protein modification; protein glycosylation. Functionally, O-glucosyltransferase that transfers glucose toward fucose with a beta-1,3 linkage. Specifically glucosylates O-linked fucosylglycan on TSP type-1 domains of proteins, thereby contributing to elongation of O-fucosylglycan. The sequence is that of Beta-1,3-glucosyltransferase from Homo sapiens (Human).